Reading from the N-terminus, the 218-residue chain is Capsid protein (218 aa).

The residue at position 1 (M1) is an N-acetylmethionine; by host. The span at 1–10 (MDKSESTSAG) shows a compositional bias: low complexity. Residues 1–30 (MDKSESTSAGRNRRRRLRRGSRSAPSSSDA) are disordered. The segment covering 11 to 21 (RNRRRRLRRGS) has biased composition (basic residues).

This sequence belongs to the cucumovirus capsid protein family.

Its subcellular location is the virion. Capsid protein. Probably binds RNA and plays a role in packaging. This Cucumber mosaic virus (strain Kor) (CMV) protein is Capsid protein.